Consider the following 188-residue polypeptide: Elongation factor P (188 aa).

An N6-(3,6-diaminohexanoyl)-5-hydroxylysine modification is found at Lys-34.

It belongs to the elongation factor P family. May be beta-lysylated on the epsilon-amino group of Lys-34 by the combined action of EpmA and EpmB, and then hydroxylated on the C5 position of the same residue by EpmC (if this protein is present). Lysylation is critical for the stimulatory effect of EF-P on peptide-bond formation. The lysylation moiety may extend toward the peptidyltransferase center and stabilize the terminal 3-CCA end of the tRNA. Hydroxylation of the C5 position on Lys-34 may allow additional potential stabilizing hydrogen-bond interactions with the P-tRNA.

Its subcellular location is the cytoplasm. It functions in the pathway protein biosynthesis; polypeptide chain elongation. Its function is as follows. Involved in peptide bond synthesis. Alleviates ribosome stalling that occurs when 3 or more consecutive Pro residues or the sequence PPG is present in a protein, possibly by augmenting the peptidyl transferase activity of the ribosome. Modification of Lys-34 is required for alleviation. This Stenotrophomonas maltophilia (strain R551-3) protein is Elongation factor P.